We begin with the raw amino-acid sequence, 440 residues long: Glutamate-1-semialdehyde 2,1-aminomutase (440 aa).

N6-(pyridoxal phosphate)lysine is present on lysine 273.

The protein belongs to the class-III pyridoxal-phosphate-dependent aminotransferase family. HemL subfamily. Homodimer. Pyridoxal 5'-phosphate serves as cofactor.

Its subcellular location is the cytoplasm. The catalysed reaction is (S)-4-amino-5-oxopentanoate = 5-aminolevulinate. The protein operates within porphyrin-containing compound metabolism; protoporphyrin-IX biosynthesis; 5-aminolevulinate from L-glutamyl-tRNA(Glu): step 2/2. In Alkaliphilus metalliredigens (strain QYMF), this protein is Glutamate-1-semialdehyde 2,1-aminomutase.